We begin with the raw amino-acid sequence, 949 residues long: Translation initiation factor IF-2 (949 aa).

Disordered stretches follow at residues 50–206 (FTEK…GAAR) and 220–359 (QNAE…TERK). 2 stretches are compositionally biased toward basic and acidic residues: residues 52-84 (EKPK…KVEK) and 104-143 (FKAE…DQGS). 2 stretches are compositionally biased toward polar residues: residues 144–154 (KNRNFNKSQGQ) and 164–180 (GSQQ…SNKP). Positions 187-206 (NAANRNQNNSQQERQVGAAR) are enriched in low complexity. A compositionally biased stretch (basic and acidic residues) spans 224-275 (YMRHKETQLREQEEARRLAERAKEEARLAAQKAAEEKAKEAEKAAKTERFEP). The segment covering 319–336 (KSWNNQNQVRNQRNSNWN) has biased composition (low complexity). The tr-type G domain occupies 450–619 (ERAPVVTIMG…LLVAEVEELK (170 aa)). Residues 459–466 (GHVDHGKT) form a G1 region. 459 to 466 (GHVDHGKT) lines the GTP pocket. Residues 484 to 488 (GITQH) form a G2 region. The segment at 505–508 (DTPG) is G3. GTP contacts are provided by residues 505–509 (DTPGH) and 559–562 (NKID). The tract at residues 559-562 (NKID) is G4. Residues 595–597 (SAK) are G5.

It belongs to the TRAFAC class translation factor GTPase superfamily. Classic translation factor GTPase family. IF-2 subfamily.

It localises to the cytoplasm. Functionally, one of the essential components for the initiation of protein synthesis. Protects formylmethionyl-tRNA from spontaneous hydrolysis and promotes its binding to the 30S ribosomal subunits. Also involved in the hydrolysis of GTP during the formation of the 70S ribosomal complex. The protein is Translation initiation factor IF-2 of Streptococcus uberis (strain ATCC BAA-854 / 0140J).